A 144-amino-acid chain; its full sequence is Cytochrome c oxidase subunit 4 isoform 1, mitochondrial (144 aa).

The Mitochondrial matrix segment spans residues 1-73 (SVVKSEDFTL…SFAEMNRRSN (73 aa)). Lysine 4 carries the N6-acetyllysine; alternate modification. An N6-succinyllysine; alternate modification is found at lysine 4. Lysine 28 carries the N6-acetyllysine modification. 2 positions are modified to phosphoserine: serine 31 and serine 33. Residue lysine 35 is modified to N6-acetyllysine; alternate. Lysine 35 bears the N6-succinyllysine; alternate mark. Lysine 42 carries the post-translational modification N6-acetyllysine. A helical membrane pass occupies residues 74–99 (EWKTVVGTAMFFFGITALIVMWEKRY). The Mitochondrial intermembrane segment spans residues 100–144 (VYGPLPQTFDKEWVAMQTKRMLDMKVNPIQGLASKWDYEKNEWKK).

Belongs to the cytochrome c oxidase IV family. Component of the cytochrome c oxidase (complex IV, CIV), a multisubunit enzyme composed of 14 subunits. The complex is composed of a catalytic core of 3 subunits MT-CO1, MT-CO2 and MT-CO3, encoded in the mitochondrial DNA, and 11 supernumerary subunits COX4I, COX5A, COX5B, COX6A, COX6B, COX6C, COX7A, COX7B, COX7C, COX8 and NDUFA4, which are encoded in the nuclear genome. The complex exists as a monomer or a dimer and forms supercomplexes (SCs) in the inner mitochondrial membrane with NADH-ubiquinone oxidoreductase (complex I, CI) and ubiquinol-cytochrome c oxidoreductase (cytochrome b-c1 complex, complex III, CIII), resulting in different assemblies (supercomplex SCI(1)III(2)IV(1) and megacomplex MCI(2)III(2)IV(2)). Interacts with PHB2; the interaction decreases in absence of SPHK2. Interacts with AFG1L. Interacts with ABCB7; this interaction allows the regulation of cellular iron homeostasis and cellular reactive oxygen species (ROS) levels in cardiomyocytes. Interacts with FLVCR2; this interaction occurs in the absence of heme and is disrupted upon heme binding. Interacts with IRGC.

It is found in the mitochondrion inner membrane. The protein operates within energy metabolism; oxidative phosphorylation. Component of the cytochrome c oxidase, the last enzyme in the mitochondrial electron transport chain which drives oxidative phosphorylation. The respiratory chain contains 3 multisubunit complexes succinate dehydrogenase (complex II, CII), ubiquinol-cytochrome c oxidoreductase (cytochrome b-c1 complex, complex III, CIII) and cytochrome c oxidase (complex IV, CIV), that cooperate to transfer electrons derived from NADH and succinate to molecular oxygen, creating an electrochemical gradient over the inner membrane that drives transmembrane transport and the ATP synthase. Cytochrome c oxidase is the component of the respiratory chain that catalyzes the reduction of oxygen to water. Electrons originating from reduced cytochrome c in the intermembrane space (IMS) are transferred via the dinuclear copper A center (CU(A)) of subunit 2 and heme A of subunit 1 to the active site in subunit 1, a binuclear center (BNC) formed by heme A3 and copper B (CU(B)). The BNC reduces molecular oxygen to 2 water molecules using 4 electrons from cytochrome c in the IMS and 4 protons from the mitochondrial matrix. This Theropithecus gelada (Gelada baboon) protein is Cytochrome c oxidase subunit 4 isoform 1, mitochondrial (COX4I1).